The primary structure comprises 350 residues: Ribosomal RNA large subunit methyltransferase Cfr (350 aa).

Glu-92 serves as the catalytic Proton acceptor. Residues 99–333 enclose the Radical SAM core domain; sequence EAGWESFCIS…VTIRSQFGRE (235 aa). Cys-106 and Cys-338 are joined by a disulfide. The [4Fe-4S] cluster site is built by Cys-113, Cys-117, and Cys-120. Residues 159-160, Ser-190, 213-215, and Asn-293 contribute to the S-adenosyl-L-methionine site; these read GE and SLH. The active-site S-methylcysteine intermediate is Cys-338.

It belongs to the radical SAM superfamily. RlmN family. Cfr subfamily. Requires [4Fe-4S] cluster as cofactor.

It is found in the cytoplasm. The catalysed reaction is adenosine(2503) in 23S rRNA + 2 reduced [2Fe-2S]-[ferredoxin] + 2 S-adenosyl-L-methionine = 8-methyladenosine(2503) in 23S rRNA + 5'-deoxyadenosine + L-methionine + 2 oxidized [2Fe-2S]-[ferredoxin] + S-adenosyl-L-homocysteine. Functionally, specifically methylates position 8 of adenine 2503 in 23S rRNA. Confers resistance to some classes of antibiotics. This Shouchella clausii (strain KSM-K16) (Alkalihalobacillus clausii) protein is Ribosomal RNA large subunit methyltransferase Cfr.